The chain runs to 66 residues: MGMRMMFTVFLLVVLTTTVVSSTSVRASDGRNAAADNRASDLIAQIVRRGCCSHPACNVNNPHICG.

A signal peptide spans 1-21; sequence MGMRMMFTVFLLVVLTTTVVS. A propeptide spanning residues 22 to 49 is cleaved from the precursor; it reads STSVRASDGRNAAADNRASDLIAQIVRR. Intrachain disulfides connect cysteine 51/cysteine 57 and cysteine 52/cysteine 65. Positions 53–55 are ser-Xaa-Pro motif, crucial for potent interaction with nAChR; the sequence is SHP. Cysteine 65 is subject to Cysteine amide.

The protein belongs to the conotoxin A superfamily. In terms of tissue distribution, expressed by the venom duct.

The protein localises to the secreted. Alpha-conotoxins act on postsynaptic membranes, they bind to the nicotinic acetylcholine receptors (nAChR) and thus inhibit them. This toxin potently inhibits alpha-3 containing subunit nAChR. It inhibits alpha-3-beta-2/CHRNA3-CHRNB2 (IC(50)=10.7-33 nM (rat)/132.4-704.1 nM (human)) and alpha-3-beta-4/CHRNA3-CHRNB4 (IC(50)=47.3-97 nM (rat)/52.1 nM (human)). It also inhibits alpha-7/CHRNA7 nAChR with IC(50)=103-210 nM (human)/41-61.2 nM (rat) nAChRs. It is more potent on alpha-3-beta-2 receptors in human than in rat, due to a variation (Pro vs Gln) in alpha-3 subunit in these orthologs. Conversely, does not show species-specific differences in sensitivity at the alpha-3-beta-4 receptor. This is Alpha-conotoxin RegIIA from Conus regius (Crown cone).